We begin with the raw amino-acid sequence, 246 residues long: Ubiquinone biosynthesis O-methyltransferase (246 aa).

Positions 40, 70, 91, and 135 each coordinate S-adenosyl-L-methionine.

Belongs to the methyltransferase superfamily. UbiG/COQ3 family.

It carries out the reaction a 3-demethylubiquinol + S-adenosyl-L-methionine = a ubiquinol + S-adenosyl-L-homocysteine + H(+). The enzyme catalyses a 3-(all-trans-polyprenyl)benzene-1,2-diol + S-adenosyl-L-methionine = a 2-methoxy-6-(all-trans-polyprenyl)phenol + S-adenosyl-L-homocysteine + H(+). Its pathway is cofactor biosynthesis; ubiquinone biosynthesis. O-methyltransferase that catalyzes the 2 O-methylation steps in the ubiquinone biosynthetic pathway. In Colwellia psychrerythraea (strain 34H / ATCC BAA-681) (Vibrio psychroerythus), this protein is Ubiquinone biosynthesis O-methyltransferase.